A 379-amino-acid chain; its full sequence is Homoserine O-succinyltransferase (379 aa).

Residues Asn51–Leu360 form the AB hydrolase-1 domain. Residue Ser157 is the Nucleophile of the active site. Residue Arg227 coordinates substrate. Active-site residues include Asp323 and His356. Residue Asp357 participates in substrate binding.

Belongs to the AB hydrolase superfamily. MetX family. Homodimer.

Its subcellular location is the cytoplasm. It carries out the reaction L-homoserine + succinyl-CoA = O-succinyl-L-homoserine + CoA. Its pathway is amino-acid biosynthesis; L-methionine biosynthesis via de novo pathway; O-succinyl-L-homoserine from L-homoserine: step 1/1. Transfers a succinyl group from succinyl-CoA to L-homoserine, forming succinyl-L-homoserine. The sequence is that of Homoserine O-succinyltransferase from Ectopseudomonas mendocina (strain ymp) (Pseudomonas mendocina).